Consider the following 66-residue polypeptide: UPF0150 protein AF_0072.1 (66 aa).

Belongs to the UPF0150 family.

In Archaeoglobus fulgidus (strain ATCC 49558 / DSM 4304 / JCM 9628 / NBRC 100126 / VC-16), this protein is UPF0150 protein AF_0072.1.